The sequence spans 169 residues: Peptide methionine sulfoxide reductase MsrA (169 aa).

Residue C10 is part of the active site.

This sequence belongs to the MsrA Met sulfoxide reductase family.

The catalysed reaction is L-methionyl-[protein] + [thioredoxin]-disulfide + H2O = L-methionyl-(S)-S-oxide-[protein] + [thioredoxin]-dithiol. The enzyme catalyses [thioredoxin]-disulfide + L-methionine + H2O = L-methionine (S)-S-oxide + [thioredoxin]-dithiol. In terms of biological role, has an important function as a repair enzyme for proteins that have been inactivated by oxidation. Catalyzes the reversible oxidation-reduction of methionine sulfoxide in proteins to methionine. The polypeptide is Peptide methionine sulfoxide reductase MsrA (Streptococcus pyogenes serotype M6 (strain ATCC BAA-946 / MGAS10394)).